A 598-amino-acid chain; its full sequence is MFS transporter L2 (598 aa).

The next 3 helical transmembrane spans lie at 83 to 103 (IAAF…ATSI), 122 to 142 (FWAG…LGSF), and 150 to 170 (SLIY…AVAN). Asn-171 carries an N-linked (GlcNAc...) asparagine glycan. Helical transmembrane passes span 183–203 (GVGG…TVPL), 212–232 (FFGM…GAFA), 239–259 (WVFW…TVFL), 277–297 (WIGM…ITWG), and 309–329 (LVPL…QEKF). N-linked (GlcNAc...) asparagine glycosylation occurs at Asn-342. The next 6 membrane-spanning stretches (helical) occupy residues 346 to 366 (ALLY…LYFM), 383 to 403 (VALF…GIAI), 411 to 431 (WANW…ILLK), 439 to 459 (WIFL…AMAL), 476 to 496 (MFSF…GVVF), and 550 to 570 (YIWI…LFID).

Belongs to the major facilitator superfamily.

The protein resides in the membrane. Its function is as follows. MFS transporter; part of the gene cluster that mediates the biosynthesis of squalestatin S1 (SQS1, also known as zaragozic acid A), a lead compound for the treatment of hyper-cholesterolemia by targeting squalene synthase (SS). In Phoma sp. (strain ATCC 20986 / MF5453), this protein is MFS transporter L2.